The primary structure comprises 250 residues: AA9 family lytic polysaccharide monooxygenase B (250 aa).

A signal peptide spans 1-21 (MTLSKITSIAGLLASASLVAG). 2 residues coordinate Cu(2+): His22 and His107. His22 is modified (methylhistidine). 2 disulfide bridges follow: Cys77-Cys199 and Cys118-Cys122. N-linked (GlcNAc...) asparagine glycosylation occurs at Asn159. O2 contacts are provided by His185 and Gln194. Position 196 (Tyr196) interacts with Cu(2+).

This sequence belongs to the polysaccharide monooxygenase AA9 family. Cu(2+) serves as cofactor. In terms of processing, the catalytically essential N-terminal histidine His-22 is post-translationally modified by methylation to prevent protonation of the histidine side chain, and protect the critical active site of the enzyme from oxidative damage.

It localises to the secreted. The catalysed reaction is [(1-&gt;4)-beta-D-glucosyl]n+m + reduced acceptor + O2 = 4-dehydro-beta-D-glucosyl-[(1-&gt;4)-beta-D-glucosyl]n-1 + [(1-&gt;4)-beta-D-glucosyl]m + acceptor + H2O.. In terms of biological role, lytic polysaccharide monooxygenase (LPMO) that depolymerizes crystalline and amorphous polysaccharides via the oxidation of scissile alpha- or beta-(1-4)-glycosidic bonds, yielding C1 and C4 oxidation products. Catalysis by LPMOs requires the reduction of the active-site copper from Cu(II) to Cu(I) by a reducing agent and H(2)O(2) or O(2) as a cosubstrate. Shows activity on phosphoric acid swollen cellulose, on NaOH pretreated soy spent flakes as well as on crystalline cellulose (Avicel). Does not have a positive effect on cel6A activity, but acts synergistically with endoglucanase egl7. The chain is AA9 family lytic polysaccharide monooxygenase B from Aspergillus fumigatus (strain ATCC MYA-4609 / CBS 101355 / FGSC A1100 / Af293) (Neosartorya fumigata).